The following is an 844-amino-acid chain: Beta-mannosidase B (844 aa).

Glu-432 (proton donor) is an active-site residue. The N-linked (GlcNAc...) asparagine glycan is linked to Asn-723.

Belongs to the glycosyl hydrolase 2 family. Beta-mannosidase B subfamily.

It catalyses the reaction Hydrolysis of terminal, non-reducing beta-D-mannose residues in beta-D-mannosides.. It functions in the pathway glycan metabolism; N-glycan degradation. Exoglycosidase that cleaves the single beta-linked mannose residue from the non-reducing end of beta-mannosidic oligosaccharides of various complexity and length. Prefers mannobiose over mannotriose and has no activity against polymeric mannan. Is also severely restricted by galactosyl substitutions at the +1 subsite. This chain is Beta-mannosidase B (mndB), found in Aspergillus flavus (strain ATCC 200026 / FGSC A1120 / IAM 13836 / NRRL 3357 / JCM 12722 / SRRC 167).